Reading from the N-terminus, the 561-residue chain is 2-succinyl-5-enolpyruvyl-6-hydroxy-3-cyclohexene-1-carboxylate synthase (561 aa).

Belongs to the TPP enzyme family. MenD subfamily. In terms of assembly, homodimer. Requires Mg(2+) as cofactor. It depends on Mn(2+) as a cofactor. The cofactor is thiamine diphosphate.

The enzyme catalyses isochorismate + 2-oxoglutarate + H(+) = 5-enolpyruvoyl-6-hydroxy-2-succinyl-cyclohex-3-ene-1-carboxylate + CO2. The protein operates within quinol/quinone metabolism; 1,4-dihydroxy-2-naphthoate biosynthesis; 1,4-dihydroxy-2-naphthoate from chorismate: step 2/7. It participates in cofactor biosynthesis; phylloquinone biosynthesis. Its function is as follows. Catalyzes the thiamine diphosphate-dependent decarboxylation of 2-oxoglutarate and the subsequent addition of the resulting succinic semialdehyde-thiamine pyrophosphate anion to isochorismate to yield 2-succinyl-5-enolpyruvyl-6-hydroxy-3-cyclohexene-1-carboxylate (SEPHCHC). The chain is 2-succinyl-5-enolpyruvyl-6-hydroxy-3-cyclohexene-1-carboxylate synthase from Synechococcus sp. (strain CC9605).